The following is a 162-amino-acid chain: Deoxyuridine 5'-triphosphate nucleotidohydrolase (162 aa).

The protein belongs to the dUTPase family. As to quaternary structure, homotrimer. It depends on Mg(2+) as a cofactor.

The protein localises to the host cytoplasm. It localises to the virion. It catalyses the reaction dUTP + H2O = dUMP + diphosphate + H(+). Functionally, the viral dUTPase may play a role in lowering the dUTP concentration in natural infections to minimize misincorporation of deoxyuridine into the viral DNA and ensure the fidelity of genome replication. The sequence is that of Deoxyuridine 5'-triphosphate nucleotidohydrolase from Ornithodoros (relapsing fever ticks).